A 219-amino-acid polypeptide reads, in one-letter code: Large ribosomal subunit protein uL3 (219 aa).

Residues glycine 133 to glutamine 153 form a disordered region. Glutamine 153 carries the N5-methylglutamine modification.

It belongs to the universal ribosomal protein uL3 family. Part of the 50S ribosomal subunit. Forms a cluster with proteins L14 and L19. Methylated by PrmB.

Its function is as follows. One of the primary rRNA binding proteins, it binds directly near the 3'-end of the 23S rRNA, where it nucleates assembly of the 50S subunit. This is Large ribosomal subunit protein uL3 from Burkholderia thailandensis (strain ATCC 700388 / DSM 13276 / CCUG 48851 / CIP 106301 / E264).